We begin with the raw amino-acid sequence, 500 residues long: Cobyric acid synthase (500 aa).

Positions 255 to 444 constitute a GATase cobBQ-type domain; it reads AIDIAVIRCP…MHDLFHNDAF (190 aa). Residue Cys-337 is the Nucleophile of the active site. His-436 is an active-site residue.

Belongs to the CobB/CobQ family. CobQ subfamily.

It participates in cofactor biosynthesis; adenosylcobalamin biosynthesis. Catalyzes amidations at positions B, D, E, and G on adenosylcobyrinic A,C-diamide. NH(2) groups are provided by glutamine, and one molecule of ATP is hydrogenolyzed for each amidation. The protein is Cobyric acid synthase of Geobacillus thermodenitrificans (strain NG80-2).